The following is a 556-amino-acid chain: Glutamine--tRNA ligase (556 aa).

A 'HIGH' region motif is present at residues 34-44 (PEPNGYLHIGH). ATP is bound by residues 35 to 37 (EPN) and 41 to 47 (HIGHAKS). Residues aspartate 67 and tyrosine 212 each contribute to the L-glutamine site. Residues threonine 231, 261 to 262 (RL), and 269 to 271 (MSK) each bind ATP. The short motif at 268-272 (VMSKR) is the 'KMSKS' region element.

This sequence belongs to the class-I aminoacyl-tRNA synthetase family. As to quaternary structure, monomer.

The protein localises to the cytoplasm. It catalyses the reaction tRNA(Gln) + L-glutamine + ATP = L-glutaminyl-tRNA(Gln) + AMP + diphosphate. In Vibrio campbellii (strain ATCC BAA-1116), this protein is Glutamine--tRNA ligase.